Here is a 290-residue protein sequence, read N- to C-terminus: L-proline cis-3-hydroxylase 1 (290 aa).

Positions 107, 109, and 158 each coordinate Fe cation. Arg-168 is a binding site for 2-oxoglutarate.

This sequence belongs to the L-proline cis-4-/cis-3-hydroxylase family. In terms of assembly, homodimer. It depends on Fe(2+) as a cofactor.

It catalyses the reaction L-proline + 2-oxoglutarate + O2 = cis-3-hydroxy-L-proline + succinate + CO2. With respect to regulation, inhibited by metal ions such as Co(2+), Zn(2+), Ni(2+) or Cu(2+). Is also inhibited by EDTA in vitro. Unlike the procollagen-proline cis-3- and trans-4-hydroxylases from mammals, does not necessarily require L-ascorbate for activity although it does increase the activity of the enzyme. Dioxygenase that catalyzes the 2-oxoglutarate-dependent selective hydroxylation of free L-proline to cis-3-hydroxy-L-proline (cis-3-Hyp). D-proline, trans-4-hydroxy-L-proline, cis-4-hydroxy-L-proline, cis-4-hydroxy-D-proline, and 3,4-dehydro-DL-proline are not substrates. The sequence is that of L-proline cis-3-hydroxylase 1 from Streptomyces sp.